A 56-amino-acid chain; its full sequence is Small ribosomal subunit protein uS14 (56 aa).

Positions 21, 24, 39, and 42 each coordinate Zn(2+).

This sequence belongs to the universal ribosomal protein uS14 family. As to quaternary structure, component of the 40S small ribosomal subunit. It depends on Zn(2+) as a cofactor.

The protein localises to the cytoplasm. It localises to the cytosol. It is found in the rough endoplasmic reticulum. The protein is Small ribosomal subunit protein uS14 (RpS29) of Lonomia obliqua (Moth).